The sequence spans 194 residues: PLASMODESMATA CALLOSE-BINDING PROTEIN 2 (194 aa).

A signal peptide spans 1–16 (MAPLVLYLLTLLMAGH). A disulfide bond links cysteine 22 and cysteine 84. Asparagine 85 is a glycosylation site (N-linked (GlcNAc...) asparagine). Over residues 106–116 (SSASGSSGSGS) the composition is skewed to low complexity. The segment at 106–140 (SSASGSSGSGSTTVTPGKNSPKGSNSITTFPGGNS) is disordered. The span at 117–140 (TTVTPGKNSPKGSNSITTFPGGNS) shows a compositional bias: polar residues. The N-linked (GlcNAc...) asparagine glycan is linked to asparagine 154. Serine 171 is lipidated: GPI-anchor amidated serine. Residues 172–194 (SGFALYYSNNLLLTGFCSLVMML) constitute a propeptide, removed in mature form.

Post-translationally, contains two additional disulfide bonds. In terms of tissue distribution, expressed in the shoot apical region and in young leaves but also detected in the laminar and vasculature of mature leaves.

Its subcellular location is the cell membrane. It is found in the cell junction. The protein resides in the plasmodesma. Functionally, able to bind (1-&gt;3)-beta-D-glucans (laminarin). The protein is PLASMODESMATA CALLOSE-BINDING PROTEIN 2 (PDCB2) of Arabidopsis thaliana (Mouse-ear cress).